A 325-amino-acid polypeptide reads, in one-letter code: Solute carrier family 35 member B1 (325 aa).

Helical transmembrane passes span 18-38 (PVCF…QESI), 54-74 (FALS…KLLI), 88-108 (WLYA…NSAL), 139-159 (YPLA…LFMY), 171-191 (IFGY…LTGV), 213-233 (LWST…WEFL), 246-266 (ILLF…TVVY), and 288-308 (VILF…LVFL). Residues 321-325 (KKTSH) carry the Di-lysine motif motif.

It belongs to the nucleotide-sugar transporter family. SLC35B subfamily.

It is found in the endoplasmic reticulum membrane. Probable sugar transporter. This chain is Solute carrier family 35 member B1 (SLC35B1), found in Gallus gallus (Chicken).